The following is a 356-amino-acid chain: Thiamine thiazole synthase, chloroplastic (356 aa).

The N-terminal 51 residues, 1-51 (MAAMASTAFAPSVSSTTNKLFDSSFHGAPMSPSLLRLQPIKSSRPNNLSIS), are a transit peptide targeting the chloroplast. Substrate is bound by residues A101, 121–122 (EQ), G129, and A194. Residue C223 is modified to 2,3-didehydroalanine (Cys). Substrate is bound by residues D225, H240, M292, and 302-304 (RMG).

The protein belongs to the THI4 family. As to quaternary structure, homooctamer. Fe cation serves as cofactor. In terms of processing, during the catalytic reaction, a sulfide is transferred from Cys-223 to a reaction intermediate, generating a dehydroalanine residue.

It localises to the plastid. The protein resides in the chloroplast. It carries out the reaction [ADP-thiazole synthase]-L-cysteine + glycine + NAD(+) = [ADP-thiazole synthase]-dehydroalanine + ADP-5-ethyl-4-methylthiazole-2-carboxylate + nicotinamide + 3 H2O + 2 H(+). Involved in biosynthesis of the thiamine precursor thiazole. Catalyzes the conversion of NAD and glycine to adenosine diphosphate 5-(2-hydroxyethyl)-4-methylthiazole-2-carboxylic acid (ADT), an adenylated thiazole intermediate. The reaction includes an iron-dependent sulfide transfer from a conserved cysteine residue of the protein to a thiazole intermediate. The enzyme can only undergo a single turnover, which suggests it is a suicide enzyme. May have additional roles in adaptation to various stress conditions and in DNA damage tolerance. The chain is Thiamine thiazole synthase, chloroplastic from Citrus sinensis (Sweet orange).